A 390-amino-acid chain; its full sequence is Phosphopentomutase (390 aa).

Mn(2+) is bound by residues D12, D284, H289, D325, H326, and H337.

The protein belongs to the phosphopentomutase family. The cofactor is Mn(2+).

The protein localises to the cytoplasm. The enzyme catalyses 2-deoxy-alpha-D-ribose 1-phosphate = 2-deoxy-D-ribose 5-phosphate. It catalyses the reaction alpha-D-ribose 1-phosphate = D-ribose 5-phosphate. It functions in the pathway carbohydrate degradation; 2-deoxy-D-ribose 1-phosphate degradation; D-glyceraldehyde 3-phosphate and acetaldehyde from 2-deoxy-alpha-D-ribose 1-phosphate: step 1/2. Its function is as follows. Isomerase that catalyzes the conversion of deoxy-ribose 1-phosphate (dRib-1-P) and ribose 1-phosphate (Rib-1-P) to deoxy-ribose 5-phosphate (dRib-5-P) and ribose 5-phosphate (Rib-5-P), respectively. The polypeptide is Phosphopentomutase (Macrococcus caseolyticus (strain JCSC5402) (Macrococcoides caseolyticum)).